Reading from the N-terminus, the 171-residue chain is UPF0398 protein stu0232 (171 aa).

It belongs to the UPF0398 family.

The sequence is that of UPF0398 protein stu0232 from Streptococcus thermophilus (strain ATCC BAA-250 / LMG 18311).